A 275-amino-acid polypeptide reads, in one-letter code: MVDIYGLVVALILGIVEGLTEFLPVSSTGHMILVSYMLGFNNDKTKIFEVLIQLGSILAVIIICKQRWFLLFGLNLKKWEIYQHNINHGSRLHLYHIILGLIPSSILGLMFYEQIKSFFEPKYVMYSLILGSLLLLISQLIHDKKPRATCIDDISYLQAFLIGCFQCFALLPGFSRSGATISGGMLVGVSSDAAFEFSFLLAVPMIFGATILDLYRHLPVLSLDDIPMFIIGFITAFLVALITIKLFWRIIKGMSFIPFVLYRFLLVIVFYLILI.

8 helical membrane-spanning segments follow: residues 4–24 (IYGL…EFLP), 54–74 (LGSI…LFGL), 92–112 (LHLY…LMFY), 123–143 (YVMY…LIHD), 154–174 (ISYL…LPGF), 194–214 (AFEF…ILDL), 228–248 (MFII…KLFW), and 255–275 (SFIP…LILI).

Belongs to the UppP family.

It localises to the cell membrane. The catalysed reaction is di-trans,octa-cis-undecaprenyl diphosphate + H2O = di-trans,octa-cis-undecaprenyl phosphate + phosphate + H(+). Its function is as follows. Catalyzes the dephosphorylation of undecaprenyl diphosphate (UPP). Confers resistance to bacitracin. The protein is Undecaprenyl-diphosphatase of Baumannia cicadellinicola subsp. Homalodisca coagulata.